Reading from the N-terminus, the 49-residue chain is MRVKISLKCSECGKKNYYTDKNKTAKEKLSFRRYCPKCNKHTVHSETKL.

The protein belongs to the bacterial ribosomal protein bL33 family.

In Pseudothermotoga lettingae (strain ATCC BAA-301 / DSM 14385 / NBRC 107922 / TMO) (Thermotoga lettingae), this protein is Large ribosomal subunit protein bL33.